The chain runs to 358 residues: Alanine racemase (358 aa).

The active-site Proton acceptor; specific for D-alanine is the Lys35. Lys35 bears the N6-(pyridoxal phosphate)lysine mark. Arg130 is a substrate binding site. Tyr255 (proton acceptor; specific for L-alanine) is an active-site residue. Met303 is a substrate binding site.

This sequence belongs to the alanine racemase family. Pyridoxal 5'-phosphate serves as cofactor.

It carries out the reaction L-alanine = D-alanine. It participates in amino-acid biosynthesis; D-alanine biosynthesis; D-alanine from L-alanine: step 1/1. Catalyzes the interconversion of L-alanine and D-alanine. May also act on other amino acids. This is Alanine racemase (alr) from Shewanella loihica (strain ATCC BAA-1088 / PV-4).